Here is a 200-residue protein sequence, read N- to C-terminus: Prophage tail fiber assembly protein homolog TfaE (200 aa).

The protein belongs to the tfa family.

This Escherichia coli (strain K12) protein is Prophage tail fiber assembly protein homolog TfaE (tfaE).